The sequence spans 629 residues: tRNA uridine 5-carboxymethylaminomethyl modification enzyme MnmG (629 aa).

FAD contacts are provided by residues 13 to 18 (GGGHAG), Val125, and Ser180. Residue 273 to 287 (GPRYCPSIEDKVMRF) coordinates NAD(+). Gln370 is a binding site for FAD.

It belongs to the MnmG family. Homodimer. Heterotetramer of two MnmE and two MnmG subunits. Requires FAD as cofactor.

The protein localises to the cytoplasm. Functionally, NAD-binding protein involved in the addition of a carboxymethylaminomethyl (cmnm) group at the wobble position (U34) of certain tRNAs, forming tRNA-cmnm(5)s(2)U34. This is tRNA uridine 5-carboxymethylaminomethyl modification enzyme MnmG from Escherichia coli (strain SMS-3-5 / SECEC).